A 260-amino-acid chain; its full sequence is Uroplakin-1b (260 aa).

The Cytoplasmic segment spans residues 1 to 15; that stretch reads MAKDDSTVRCFQGLL. A helical membrane pass occupies residues 16–36; the sequence is IFGHVIVGMCGIALTAECIFF. Residues 37–59 lie on the Extracellular side of the membrane; sequence VSDQHSLYPLLEATNNDDIFGAA. A helical membrane pass occupies residues 60–80; the sequence is WIGMFVGICLFCLSVLAIVGI. The Cytoplasmic portion of the chain corresponds to 81-86; sequence MKSNRK. Residues 87-107 traverse the membrane as a helical segment; sequence ILLAYFIMMFIVYGFEVASCI. The Extracellular segment spans residues 108–229; the sequence is TAATQRDFFT…ELISGPMDRH (122 aa). A helical membrane pass occupies residues 230–250; it reads AWGVAWFGFAILCWTFWVLLG. At 251–260 the chain is on the cytoplasmic side; the sequence is TMFYWSRIEY.

Belongs to the tetraspanin (TM4SF) family. As to quaternary structure, heterodimer with uroplakin-3A (UPK3A) or uroplakin-3B (UPK3B). N-glycosylated with high-mannose oligosaccharides.

The protein localises to the membrane. Component of the asymmetric unit membrane (AUM); a highly specialized biomembrane elaborated by terminally differentiated urothelial cells. May play an important role in normal bladder epithelial physiology, possibly in regulating membrane permeability of superficial umbrella cells or in stabilizing the apical membrane through AUM/cytoskeletal interactions. The polypeptide is Uroplakin-1b (Upk1b) (Rattus norvegicus (Rat)).